We begin with the raw amino-acid sequence, 201 residues long: Probable quinol oxidase subunit 3 (201 aa).

A run of 5 helical transmembrane segments spans residues 20–40 (LGFW…FATL), 62–82 (LVLI…IAIY), 91–111 (LMLI…GFEI), 133–153 (FFIL…WIIC), and 180–200 (FLDV…MVFS).

This sequence belongs to the cytochrome c oxidase subunit 3 family.

The protein localises to the cell membrane. It catalyses the reaction 2 a quinol + O2 = 2 a quinone + 2 H2O. Its function is as follows. Catalyzes quinol oxidation with the concomitant reduction of oxygen to water. The polypeptide is Probable quinol oxidase subunit 3 (qoxC) (Staphylococcus saprophyticus subsp. saprophyticus (strain ATCC 15305 / DSM 20229 / NCIMB 8711 / NCTC 7292 / S-41)).